Reading from the N-terminus, the 718-residue chain is Heat shock 70 kDa protein 6, chloroplastic (718 aa).

The transit peptide at 1–92 directs the protein to the chloroplast; that stretch reads MASSAAQIHV…IDLGTTNSAV (92 aa). The segment at 671–718 is disordered; sequence QSLYNQPGAGGPGAGPSPGGEGASSGDSSSSKGGDGDDVIDADFTDSQ. Gly residues predominate over residues 678 to 693; the sequence is GAGGPGAGPSPGGEGA. A compositionally biased stretch (acidic residues) spans 706–718; that stretch reads GDDVIDADFTDSQ.

It belongs to the heat shock protein 70 (TC 1.A.33) family. DnaK subfamily. In terms of assembly, interacts with geminivirus movement protein (MP).

The protein localises to the plastid. It is found in the chloroplast stroma. Functionally, acts redundantly with HSP70-7 in the thermotolerance of germinating seeds. Plays an important role in the protein precursor import into chloroplasts. In cooperation with other chaperones, Hsp70s are key components that facilitate folding of de novo synthesized proteins, assist translocation of precursor proteins into organelles, and are responsible for degradation of damaged protein under stress conditions. This is Heat shock 70 kDa protein 6, chloroplastic (HSP70-6) from Arabidopsis thaliana (Mouse-ear cress).